A 414-amino-acid chain; its full sequence is Serine hydroxymethyltransferase (414 aa).

(6S)-5,6,7,8-tetrahydrofolate contacts are provided by residues leucine 121 and 125–127 (GHL). Lysine 229 bears the N6-(pyridoxal phosphate)lysine mark.

Belongs to the SHMT family. As to quaternary structure, homodimer. Requires pyridoxal 5'-phosphate as cofactor.

It localises to the cytoplasm. It carries out the reaction (6R)-5,10-methylene-5,6,7,8-tetrahydrofolate + glycine + H2O = (6S)-5,6,7,8-tetrahydrofolate + L-serine. The protein operates within one-carbon metabolism; tetrahydrofolate interconversion. It functions in the pathway amino-acid biosynthesis; glycine biosynthesis; glycine from L-serine: step 1/1. Functionally, catalyzes the reversible interconversion of serine and glycine with tetrahydrofolate (THF) serving as the one-carbon carrier. This reaction serves as the major source of one-carbon groups required for the biosynthesis of purines, thymidylate, methionine, and other important biomolecules. Also exhibits THF-independent aldolase activity toward beta-hydroxyamino acids, producing glycine and aldehydes, via a retro-aldol mechanism. In Acidovorax ebreus (strain TPSY) (Diaphorobacter sp. (strain TPSY)), this protein is Serine hydroxymethyltransferase.